Reading from the N-terminus, the 155-residue chain is Endoribonuclease YbeY (155 aa).

3 residues coordinate Zn(2+): histidine 114, histidine 118, and histidine 124.

This sequence belongs to the endoribonuclease YbeY family. Requires Zn(2+) as cofactor.

The protein localises to the cytoplasm. Its function is as follows. Single strand-specific metallo-endoribonuclease involved in late-stage 70S ribosome quality control and in maturation of the 3' terminus of the 16S rRNA. This is Endoribonuclease YbeY from Baumannia cicadellinicola subsp. Homalodisca coagulata.